The chain runs to 1132 residues: Serine/threonine-protein kinase spk-1 (1132 aa).

Residues 75-95 traverse the membrane as a helical segment; the sequence is GGSLILTDIFPTVLFMFVVLF. Disordered stretches follow at residues 240–388 and 419–481; these read NEDQ…DSDD and NKKA…KRGG. Acidic residues-rich tracts occupy residues 281–290 and 311–336; these read SEDEDVESQE and DEPIEEELASCHSDEDDHQNEVLGDE. The segment covering 362–372 has biased composition (low complexity); the sequence is DSSVSSSTSST. Acidic residues predominate over residues 373 to 388; that stretch reads PDDDEDDSATSYDSDD. The span at 421 to 433 shows a compositional bias: basic and acidic residues; the sequence is KAEVNANEERMDD. A compositionally biased stretch (low complexity) spans 434 to 443; the sequence is VSVSPGRSDS. The 550-residue stretch at 495–1044 folds into the Protein kinase domain; sequence YHVIRKLGWG…ANDALKHPFL (550 aa). ATP contacts are provided by residues 501–509 and K524; that span reads LGWGHFSTV. D628 serves as the catalytic Proton acceptor. Residues 1066-1121 are disordered; sequence QVPEALDGNQEVYRDENDSNSASERSANRSAGSDDEEEFHMDRPGPSGVINEPADV. The segment covering 1084–1096 has biased composition (low complexity); sequence SNSASERSANRSA.

This sequence belongs to the protein kinase superfamily. Ser/Thr protein kinase family.

It is found in the membrane. The enzyme catalyses L-seryl-[protein] + ATP = O-phospho-L-seryl-[protein] + ADP + H(+). The catalysed reaction is L-threonyl-[protein] + ATP = O-phospho-L-threonyl-[protein] + ADP + H(+). Functionally, required for embryogenesis and germline development in both adult hermaphrodites and males. SR-protein kinase (SRPK) that binds directly to and phosphorylates RS domains. The polypeptide is Serine/threonine-protein kinase spk-1 (spk-1) (Caenorhabditis briggsae).